A 1564-amino-acid chain; its full sequence is Abnormal spindle-like microcephaly-associated protein homolog (1564 aa).

31 IQ domains span residues 31-60, 220-251, 270-299, 293-322, 366-395, 389-420, 439-468, 462-491, 512-541, 535-566, 608-639, 658-687, 681-712, 731-762, 754-785, 804-835, 827-856, 877-908, 900-931, 949-980, 972-1003, 1022-1053, 1045-1076, 1095-1126, 1168-1199, 1304-1333, 1327-1358, 1377-1406, 1452-1483, 1474-1503, and 1500-1531; these read YLWA…MLKS, LKKN…VIIQ, TRSA…SVIK, ILTS…ATIK, MRES…AVIS, QRKA…IIIQ, VKKA…AAVK, QSVA…SIIK, AKAA…AAMK, EHQA…LVIQ, QHTC…LLIQ, TKAA…AAIT, CNTA…IIIQ, LKKT…TFIK, MHRA…IVIQ, ILKA…TLIQ, LRIA…ITRT, LRHS…TLIQ, MHIA…IWIQ, LQNA…AFIQ, MHRA…VVIQ, QRYS…ILIQ, MYFS…IFIQ, LRKA…VLIQ, QWHS…IIIQ, HTQA…AATR, MHLA…VIIQ, VQKS…EKMA, QSRA…RIQS, QKCA…QKRA, and QKRA…VVLQ.

It is found in the cytoplasm. It localises to the nucleus. Its function is as follows. Probable role in mitotic spindle regulation and coordination of mitotic processes. May have a preferential role in regulating neurogenesis. The chain is Abnormal spindle-like microcephaly-associated protein homolog (ASPM) from Ateles geoffroyi (Black-handed spider monkey).